Here is a 691-residue protein sequence, read N- to C-terminus: DNA ligase (691 aa).

NAD(+)-binding positions include 41-45, 90-91, and Glu-130; these read DAEYD and SL. Lys-132 acts as the N6-AMP-lysine intermediate in catalysis. 4 residues coordinate NAD(+): Arg-153, Glu-190, Lys-307, and Lys-331. Cys-425, Cys-428, Cys-443, and Cys-449 together coordinate Zn(2+). Residues 610 to 691 form the BRCT domain; sequence APQGVLAGKT…LHQLLEGNTQ (82 aa).

This sequence belongs to the NAD-dependent DNA ligase family. LigA subfamily. The cofactor is Mg(2+). Mn(2+) is required as a cofactor.

It catalyses the reaction NAD(+) + (deoxyribonucleotide)n-3'-hydroxyl + 5'-phospho-(deoxyribonucleotide)m = (deoxyribonucleotide)n+m + AMP + beta-nicotinamide D-nucleotide.. Functionally, DNA ligase that catalyzes the formation of phosphodiester linkages between 5'-phosphoryl and 3'-hydroxyl groups in double-stranded DNA using NAD as a coenzyme and as the energy source for the reaction. It is essential for DNA replication and repair of damaged DNA. This is DNA ligase from Burkholderia vietnamiensis (strain G4 / LMG 22486) (Burkholderia cepacia (strain R1808)).